The primary structure comprises 380 residues: Succinyl-diaminopimelate desuccinylase (380 aa).

Histidine 66 serves as a coordination point for Zn(2+). Aspartate 68 is a catalytic residue. Aspartate 99 provides a ligand contact to Zn(2+). The active-site Proton acceptor is the glutamate 135. Residues glutamate 136, glutamate 164, and histidine 350 each coordinate Zn(2+).

This sequence belongs to the peptidase M20A family. DapE subfamily. In terms of assembly, homodimer. Zn(2+) serves as cofactor. Co(2+) is required as a cofactor.

It catalyses the reaction N-succinyl-(2S,6S)-2,6-diaminopimelate + H2O = (2S,6S)-2,6-diaminopimelate + succinate. It participates in amino-acid biosynthesis; L-lysine biosynthesis via DAP pathway; LL-2,6-diaminopimelate from (S)-tetrahydrodipicolinate (succinylase route): step 3/3. Functionally, catalyzes the hydrolysis of N-succinyl-L,L-diaminopimelic acid (SDAP), forming succinate and LL-2,6-diaminopimelate (DAP), an intermediate involved in the bacterial biosynthesis of lysine and meso-diaminopimelic acid, an essential component of bacterial cell walls. In Magnetococcus marinus (strain ATCC BAA-1437 / JCM 17883 / MC-1), this protein is Succinyl-diaminopimelate desuccinylase.